The chain runs to 431 residues: Enolase (431 aa).

Residues H157 and E166 each contribute to the substrate site. Catalysis depends on E209, which acts as the Proton donor. Residues D244, E293, and D318 each contribute to the Mg(2+) site. E293 and D318 together coordinate substrate. The active-site Proton acceptor is the K343. Residues 370–373 (SHRS) and K394 contribute to the substrate site.

Belongs to the enolase family. In terms of assembly, homodimer. It depends on Mg(2+) as a cofactor.

It localises to the cytoplasm. The enzyme catalyses (2R)-2-phosphoglycerate = phosphoenolpyruvate + H2O. Its pathway is carbohydrate degradation; glycolysis; pyruvate from D-glyceraldehyde 3-phosphate: step 4/5. The chain is Enolase (ENO) from Fasciola hepatica (Liver fluke).